The following is a 563-amino-acid chain: Ribulokinase (563 aa).

It belongs to the ribulokinase family.

It catalyses the reaction D-ribulose + ATP = D-ribulose 5-phosphate + ADP + H(+). The catalysed reaction is L-ribulose + ATP = L-ribulose 5-phosphate + ADP + H(+). The protein operates within carbohydrate degradation; L-arabinose degradation via L-ribulose; D-xylulose 5-phosphate from L-arabinose (bacterial route): step 2/3. The chain is Ribulokinase from Mycolicibacterium smegmatis (Mycobacterium smegmatis).